Here is a 266-residue protein sequence, read N- to C-terminus: Endoplasmic reticulum vesicle protein 25 (266 aa).

A signal peptide spans 1-26; the sequence is MGSSPQSSTRTLLGLLFLLLVQLSSA. Over 27-188 the chain is Lumenal; it reads LKFDLHASSG…TNESTNERVK (162 aa). Residues 39-129 enclose the GOLD domain; it reads ERCIRNFVFK…YKSVELDVEI (91 aa). The helical transmembrane segment at 189 to 209 threads the bilayer; sequence WFAFGTMGMLVGLGVWQVVYL. Residues 210–266 are Cytoplasmic-facing; the sequence is RAYFRYVDFPVSWRVDGVVANCCSCCEQVEASYLRSSRVVFWSPLVMWTRLSWLILR.

It belongs to the EMP24/GP25L family.

It is found in the endoplasmic reticulum membrane. Its subcellular location is the golgi apparatus membrane. Functionally, constituent of COPII-coated endoplasmic reticulum-derived transport vesicles. Required for efficient transport of a subset of secretory proteins to the Golgi. Facilitates retrograde transport from the Golgi to the endoplasmic reticulum. In Aspergillus fumigatus (strain ATCC MYA-4609 / CBS 101355 / FGSC A1100 / Af293) (Neosartorya fumigata), this protein is Endoplasmic reticulum vesicle protein 25 (erv25).